A 189-amino-acid polypeptide reads, in one-letter code: Ribosome maturation factor RimM (189 aa).

Residues 118–189 (SGEYYWDDLI…IILVDWDENF (72 aa)) enclose the PRC barrel domain.

The protein belongs to the RimM family. As to quaternary structure, binds ribosomal protein uS19.

Its subcellular location is the cytoplasm. An accessory protein needed during the final step in the assembly of 30S ribosomal subunit, possibly for assembly of the head region. Essential for efficient processing of 16S rRNA. May be needed both before and after RbfA during the maturation of 16S rRNA. It has affinity for free ribosomal 30S subunits but not for 70S ribosomes. The polypeptide is Ribosome maturation factor RimM (Ruthia magnifica subsp. Calyptogena magnifica).